The primary structure comprises 406 residues: Interactor protein for cytohesin exchange factors 1 (406 aa).

The PH domain maps to 13 to 112 (HADCQGWLYK…WLNKLGFAVT (100 aa)). Disordered regions lie at residues 118 to 173 (TKDE…FSSL), 228 to 285 (CRVS…EDDE), and 383 to 406 (PQDPEVTPQEIMNPTSSDCVENSL). The span at 123-134 (CYSESEQEDPET) shows a compositional bias: acidic residues. Residues 144–160 (ASATSSPVAARRASSSS) show a composition bias toward low complexity. Positions 228–239 (CRVSENSSTTPE) are enriched in polar residues. A compositionally biased stretch (low complexity) spans 243 to 259 (LNSLSSDDTSSLNNSQD). Residues 272-285 (MTDRDEIKSSEDDE) are compositionally biased toward basic and acidic residues. The necessary for interaction with PSCD2 and to translocate to the plasma membrane stretch occupies residues 285 to 406 (EMEKLYKSLE…TSSDCVENSL (122 aa)). Positions 392–406 (EIMNPTSSDCVENSL) are enriched in polar residues.

As to quaternary structure, interacts with guanine-nucleotide exchange factors PSCD1, PSCD2, PSCD3 and PSCD4. In terms of tissue distribution, expressed in brain, spleen, lung, testis and kidney.

It localises to the cytoplasm. Its subcellular location is the cell membrane. In terms of biological role, enhances the promotion of guanine-nucleotide exchange by PSCD2 on ARF6 in a concentration-dependent manner. The sequence is that of Interactor protein for cytohesin exchange factors 1 (Ipcef1) from Rattus norvegicus (Rat).